A 469-amino-acid chain; its full sequence is Interstitial collagenase (469 aa).

The N-terminal stretch at 1–18 is a signal peptide; it reads MLSLPLLLLLLWGMGSHS. A propeptide spans 19 to 99 (activation peptide); the sequence is FPTVPSETRE…PRCGVPDVAE (81 aa). Positions 90–97 match the Cysteine switch motif; that stretch reads PRCGVPDV. Cys92 lines the Zn(2+) pocket. Residues Asp124 and Asp158 each coordinate Ca(2+). Residues His168 and Asp170 each coordinate Zn(2+). Positions 175, 176, 178, and 180 each coordinate Ca(2+). A Zn(2+)-binding site is contributed by His183. 3 residues coordinate Ca(2+): Arg190, Gly192, and Asp194. His196 contributes to the Zn(2+) binding site. Ca(2+)-binding residues include Asp198, Glu199, and Glu201. A Zn(2+)-binding site is contributed by His218. Residue Glu219 is part of the active site. Residues His222 and His228 each contribute to the Zn(2+) site. Residue Thr274 is modified to Phosphothreonine. Hemopexin repeat units lie at residues 275-324, 325-371, 374-422, and 423-466; these read PEVC…WPQL, PNGL…FGFP, VKNI…FPGI, and GDKV…WFNC. Cys278 and Cys466 are joined by a disulfide. Residues Asp285 and Gln329 each coordinate Ca(2+). A Phosphotyrosine; by PKDCC modification is found at Tyr360. Positions 378 and 427 each coordinate Ca(2+).

It belongs to the peptidase M10A family. Ca(2+) serves as cofactor. It depends on Zn(2+) as a cofactor. Tyrosine phosphorylated in platelets by PKDCC/VLK.

Its subcellular location is the secreted. The protein localises to the extracellular space. It localises to the extracellular matrix. It carries out the reaction Cleavage of the triple helix of collagen at about three-quarters of the length of the molecule from the N-terminus, at 775-Gly-|-Ile-776 in the alpha1(I) chain. Cleaves synthetic substrates and alpha-macroglobulins at bonds where P1' is a hydrophobic residue.. Can be activated without removal of the activation peptide. In terms of biological role, cleaves collagens of types I, II, and III at one site in the helical domain. Also cleaves collagens of types VII and X. The chain is Interstitial collagenase (MMP1) from Equus caballus (Horse).